Reading from the N-terminus, the 334-residue chain is Ribosomal RNA small subunit methyltransferase H (334 aa).

S-adenosyl-L-methionine is bound by residues 53 to 55 (GGH), aspartate 72, phenylalanine 99, aspartate 122, and histidine 129.

It belongs to the methyltransferase superfamily. RsmH family.

It is found in the cytoplasm. The catalysed reaction is cytidine(1402) in 16S rRNA + S-adenosyl-L-methionine = N(4)-methylcytidine(1402) in 16S rRNA + S-adenosyl-L-homocysteine + H(+). Specifically methylates the N4 position of cytidine in position 1402 (C1402) of 16S rRNA. The polypeptide is Ribosomal RNA small subunit methyltransferase H (Leptospira interrogans serogroup Icterohaemorrhagiae serovar Lai (strain 56601)).